The following is a 107-amino-acid chain: UPF0145 protein PM1668 (107 aa).

The protein belongs to the UPF0145 family.

The protein is UPF0145 protein PM1668 of Pasteurella multocida (strain Pm70).